The chain runs to 729 residues: Putative cyclic nucleotide-gated ion channel 19 (729 aa).

Residues 1–172 (MAHTRTFTSR…SKFVQVWTRV (172 aa)) lie on the Cytoplasmic side of the membrane. Residues 52-82 (SGPIHSTRRTEPLFSPSPQESPDSSSTVDVP) form a disordered region. Low complexity predominate over residues 67–81 (PSPQESPDSSSTVDV). The helical transmembrane segment at 173 to 193 (LAFSSLVAIFIDPLFFFLLLI) threads the bilayer. At 194-208 (QQDNKCIAIDWRATK) the chain is on the extracellular side. The chain crosses the membrane as a helical span at residues 209 to 229 (VLVSLRSITDLIFFINILLQF). Residues 230 to 261 (RLAYVAPESRIVGAGQLVDHPRKIARHYFRGK) lie on the Cytoplasmic side of the membrane. Residues 262-282 (FLLDMFIVFPIPQIMILRIIP) traverse the membrane as a helical segment. Residues 283-295 (LHLGTRREESEKQ) are Extracellular-facing. A helical transmembrane segment spans residues 296–316 (ILRATVLFQYIPKLYRLLPLL). At 317-332 (AGQTSTGFIFESAWAN) the chain is on the cytoplasmic side. A helical membrane pass occupies residues 333–353 (FVINLLTFMLAGHAVGSCWYL). Topologically, residues 354–451 (SALQRVKKCM…STLAGNLSPS (98 aa)) are extracellular. The helical transmembrane segment at 452–472 (YSVGEVFFTMGIIGLGLLLFA) threads the bilayer. Residues 473-729 (RLIGNMHNFL…LNTAHSNSNR (257 aa)) lie on the Cytoplasmic side of the membrane. A nucleoside 3',5'-cyclic phosphate-binding positions include 560 to 677 (IFSL…VTSL) and Glu625. The calmodulin-binding stretch occupies residues 678–694 (FSRFLRSHRVQGAIRYE). The 30-residue stretch at 699–728 (RLRAAMQIQVAWRYRKRQLQRLNTAHSNSN) folds into the IQ domain.

This sequence belongs to the cyclic nucleotide-gated cation channel (TC 1.A.1.5) family. In terms of assembly, homotetramer or heterotetramer.

The protein localises to the cell membrane. Putative cyclic nucleotide-gated ion channel. This chain is Putative cyclic nucleotide-gated ion channel 19 (CNGC19), found in Arabidopsis thaliana (Mouse-ear cress).